The chain runs to 338 residues: Peptidyl-prolyl cis-trans isomerase cyp11 (338 aa).

In terms of domain architecture, PPIase cyclophilin-type spans 7–172; that stretch reads FFDIDVDGNR…HNVMIANCGE (166 aa). Residues 186-338 are disordered; sequence ASAVSDESED…RGRFKYRPTY (153 aa). The span at 208–218 shows a compositional bias: acidic residues; sequence DDSSSDEDSEE. The segment covering 223–242 has biased composition (basic residues); that stretch reads RTKKKRSRKHSKKDKKKKKR. Basic and acidic residues predominate over residues 243–309; that stretch reads ESSNRKRSPE…PEKRSSERRV (67 aa). Positions 329–338 are enriched in basic residues; it reads RGRFKYRPTY.

The protein belongs to the cyclophilin-type PPIase family.

The enzyme catalyses [protein]-peptidylproline (omega=180) = [protein]-peptidylproline (omega=0). PPIases accelerate the folding of proteins. It catalyzes the cis-trans isomerization of proline imidic peptide bonds in oligopeptides. This is Peptidyl-prolyl cis-trans isomerase cyp11 (cyp11) from Rhizopus delemar (strain RA 99-880 / ATCC MYA-4621 / FGSC 9543 / NRRL 43880) (Mucormycosis agent).